The primary structure comprises 79 residues: Small ribosomal subunit protein bS21A (79 aa).

The segment at 57–79 (LARKKLQREGLLPAPKKVLRPTR) is disordered.

The protein belongs to the bacterial ribosomal protein bS21 family.

The polypeptide is Small ribosomal subunit protein bS21A (Rhizobium johnstonii (strain DSM 114642 / LMG 32736 / 3841) (Rhizobium leguminosarum bv. viciae)).